We begin with the raw amino-acid sequence, 77 residues long: Translational regulator CsrA (77 aa).

Belongs to the CsrA/RsmA family. As to quaternary structure, homodimer; the beta-strands of each monomer intercalate to form a hydrophobic core, while the alpha-helices form wings that extend away from the core.

The protein localises to the cytoplasm. Its function is as follows. A translational regulator that binds mRNA to regulate translation initiation and/or mRNA stability. Usually binds in the 5'-UTR at or near the Shine-Dalgarno sequence preventing ribosome-binding, thus repressing translation. Its main target seems to be the major flagellin gene, while its function is anatagonized by FliW. The chain is Translational regulator CsrA from Desulfitobacterium hafniense (strain Y51).